Reading from the N-terminus, the 237-residue chain is MVFFPPLEQGRLLRRYKRFLADIELANGEQLTIHCPNTGSMLNCMREGGQVWFSRSNDPKRKLPGTWEISETPQGRLACVNTGRANALVEEALRAGVIRELAGFTALKREVAYGEEGSRVDFRLEFDHGPAYVEVKSVTLGYPDTAVAAFPDAVTQRGAKHLRELATLARQGIRAVQLYCVNLTGIEAVRPADEIDAAYARALRAAVADGVEVLAYGARLDAELIVIDRPLPVLLNP.

It belongs to the SfsA family.

The sequence is that of Sugar fermentation stimulation protein homolog from Pseudomonas putida (strain W619).